A 292-amino-acid polypeptide reads, in one-letter code: Acetyl-coenzyme A carboxylase carboxyl transferase subunit beta (292 aa).

The 264-residue stretch at 29–292 (LWVKCSECGQ…HGVKELVQTN (264 aa)) folds into the CoA carboxyltransferase N-terminal domain. Residues cysteine 33, cysteine 36, cysteine 52, and cysteine 55 each contribute to the Zn(2+) site. A C4-type zinc finger spans residues 33–55 (CSECGQVAYRKDLISNFNVCSNC).

Belongs to the AccD/PCCB family. Acetyl-CoA carboxylase is a heterohexamer composed of biotin carboxyl carrier protein (AccB), biotin carboxylase (AccC) and two subunits each of ACCase subunit alpha (AccA) and ACCase subunit beta (AccD). Zn(2+) is required as a cofactor.

The protein localises to the cytoplasm. It carries out the reaction N(6)-carboxybiotinyl-L-lysyl-[protein] + acetyl-CoA = N(6)-biotinyl-L-lysyl-[protein] + malonyl-CoA. Its pathway is lipid metabolism; malonyl-CoA biosynthesis; malonyl-CoA from acetyl-CoA: step 1/1. In terms of biological role, component of the acetyl coenzyme A carboxylase (ACC) complex. Biotin carboxylase (BC) catalyzes the carboxylation of biotin on its carrier protein (BCCP) and then the CO(2) group is transferred by the transcarboxylase to acetyl-CoA to form malonyl-CoA. The sequence is that of Acetyl-coenzyme A carboxylase carboxyl transferase subunit beta from Prochlorococcus marinus subsp. pastoris (strain CCMP1986 / NIES-2087 / MED4).